Consider the following 94-residue polypeptide: MLKFILTCTSVILFTAVEDSSCGKGGNYPISVYESYYGCKLKLDDGYCKNICGLHGVSYGYCYASYCWCEKLSDRNVRYWDYHRNNCKNDLLYP.

The N-terminal stretch at 1–22 is a signal peptide; that stretch reads MLKFILTCTSVILFTAVEDSSC. Positions 24 to 88 constitute an LCN-type CS-alpha/beta domain; sequence KGGNYPISVY…YWDYHRNNCK (65 aa). Disulfide bonds link C39/C62, C48/C67, and C52/C69.

It belongs to the long (3 C-C) scorpion toxin superfamily. Expressed by the venom gland.

Its subcellular location is the secreted. This Lychas mucronatus (Chinese swimming scorpion) protein is Neurotoxin 213.